The sequence spans 574 residues: Amino-acid acetyltransferase, mitochondrial (574 aa).

The transit peptide at 1 to 13 directs the protein to the mitochondrion; the sequence is MWRRIFAHGLKYD. In terms of domain architecture, N-acetyltransferase spans 392-560; the sequence is KGAKPSNNSP…KRLREFMRSV (169 aa).

It belongs to the acetyltransferase family. Interacts with the acetylglutamate kinase chain of AGR5,6.

It is found in the mitochondrion. The catalysed reaction is L-glutamate + acetyl-CoA = N-acetyl-L-glutamate + CoA + H(+). It functions in the pathway amino-acid biosynthesis; L-arginine biosynthesis; N(2)-acetyl-L-ornithine from L-glutamate: step 1/4. Its activity is regulated as follows. Feedback inhibition by L-arginine. Functionally, N-acetylglutamate synthase involved in arginine biosynthesis. This Saccharomyces cerevisiae (strain YJM789) (Baker's yeast) protein is Amino-acid acetyltransferase, mitochondrial (ARG2).